The sequence spans 154 residues: uncharacterized protein (154 aa).

A run of 3 helical transmembrane segments spans residues 26–48, 97–119, and 132–150; these read VSGW…GVVT, IAMF…LIVF, and GLYT…YCAW.

The protein resides in the cell membrane. This is an uncharacterized protein from Archaeoglobus fulgidus (strain ATCC 49558 / DSM 4304 / JCM 9628 / NBRC 100126 / VC-16).